Reading from the N-terminus, the 592-residue chain is Arginine--tRNA ligase (592 aa).

The 'HIGH' region motif lies at 128–138 (ANPTGPLHVGH).

The protein belongs to the class-I aminoacyl-tRNA synthetase family. As to quaternary structure, monomer.

It localises to the cytoplasm. It carries out the reaction tRNA(Arg) + L-arginine + ATP = L-arginyl-tRNA(Arg) + AMP + diphosphate. This Hydrogenovibrio crunogenus (strain DSM 25203 / XCL-2) (Thiomicrospira crunogena) protein is Arginine--tRNA ligase.